The chain runs to 417 residues: MSLSKKLTLDKLDVRGKRVIMRVDFNVPMKKNQITNNQRIKASIPSIKYCLDNGAKAVVLMSHLGRPDGVPMPDKYSLQPVAAELKSLLGKDVLFLKDCVGAEVENACANPAPGSVILLENLRFHVEEEGKGQDPSGKKIKAEPDKIEGFRASLSKLGDVYVNDAFGTAHRAHSSMVGVNLPHKASGFLMKKELDYFAKALENPVRPFLAILGGAKVADKIQLIKNMLDKVNEMIIGGGMAYTFLKVLNNMEIGASLFDEEGAKIVKDIMTKAQKNGVRITFPVDFVTADKFDENAQVGKATVASGIPPGWMGLDCGPESNKNHAQVVAQARLIVWNGPLGVFEWDAFAKGTKALMDEIVKATSKGCITIIGGGDTATCCAKWNTEDKVSHVSTGGGASLELLEGKILPGVEALSNM.

S2 is modified (N-acetylserine). Residues S2 and S4 each carry the phosphoserine modification. An N6-acetyllysine modification is found at K11. (2R)-3-phosphoglycerate is bound by residues V23, D24, F25, N26, Q38, and R39. The residue at position 48 (K48) is an N6-acetyllysine. (2R)-3-phosphoglycerate-binding residues include S62, H63, G65, and R66. K75, K86, and K97 each carry N6-acetyllysine. L122 and R123 together coordinate (2R)-3-phosphoglycerate. Residues K131 and K146 each carry the N6-acetyllysine modification. H170 and R171 together coordinate (2R)-3-phosphoglycerate. Y196 bears the Phosphotyrosine mark. K199 bears the N6-acetyllysine mark. G214 is a binding site for ADP. CDP is bound at residue G214. Residues A215 and K216 each coordinate AMP. A215 contacts ATP. A215 serves as a coordination point for Mg(2+). Positions 218 and 219 each coordinate Mg(2+). Position 219 (D219) interacts with CDP. K220 lines the AMP pocket. K220 serves as a coordination point for ATP. Residue G238 participates in ADP binding. Residue G238 participates in CDP binding. AMP is bound at residue G239. G239 is an ATP binding site. An N6-acetyllysine mark is found at K267 and K291. G313 provides a ligand contact to AMP. Residue G313 coordinates ATP. CDP is bound by residues G338 and F343. ADP is bound at residue F343. E344 contributes to the AMP binding site. ATP contacts are provided by E344, D375, and T376. Mg(2+) is bound at residue D375.

The protein belongs to the phosphoglycerate kinase family. Monomer. Mg(2+) is required as a cofactor.

It localises to the cytoplasm. The enzyme catalyses (2R)-3-phosphoglycerate + ATP = (2R)-3-phospho-glyceroyl phosphate + ADP. The protein operates within carbohydrate degradation; glycolysis; pyruvate from D-glyceraldehyde 3-phosphate: step 2/5. Its function is as follows. Essential for sperm motility and male fertility but is not required for the completion of spermatogenesis. The chain is Phosphoglycerate kinase 2 (PGK2) from Macaca fascicularis (Crab-eating macaque).